The sequence spans 114 residues: Large ribosomal subunit protein uL22c (114 aa).

The protein belongs to the universal ribosomal protein uL22 family. In terms of assembly, part of the 50S ribosomal subunit.

The protein localises to the plastid. It is found in the cyanelle. Its function is as follows. This protein binds specifically to 23S rRNA. In terms of biological role, the globular domain of the protein is located near the polypeptide exit tunnel on the outside of the subunit, while an extended beta-hairpin is found that lines the wall of the exit tunnel in the center of the 70S ribosome. This is Large ribosomal subunit protein uL22c (rpl22) from Cyanophora paradoxa.